A 1038-amino-acid chain; its full sequence is Ubiquitin carboxyl-terminal hydrolase 36 (1038 aa).

Disordered regions lie at residues 22-44 and 107-148; these read LGGN…TNGS and ANGH…PKPK. The span at 23 to 44 shows a compositional bias: polar residues; sequence GGNSSAGSSTDQAKSGEDTNGS. The 309-residue stretch at 172-480 folds into the USP domain; sequence TGMINVGNTC…NAYIMFFELD (309 aa). Residue C181 is the Nucleophile of the active site. H439 functions as the Proton acceptor in the catalytic mechanism. Disordered regions lie at residues 487–794, 818–881, 912–985, and 1000–1038; these read PAAN…SKTG, GSPV…SNGS, LLVD…YNQN, and RFGG…QQQT. 3 stretches are compositionally biased toward low complexity: residues 502–517, 546–559, and 587–606; these read STTP…PSPT, QQNQ…LQLG, and NGNK…KSIN. Phosphoserine occurs at positions 513 and 515. The segment covering 629–641 has biased composition (polar residues); the sequence is TTAQLPSMPNMTE. 2 positions are modified to phosphothreonine: T658 and T662. Phosphoserine occurs at positions 672 and 674. The span at 703-728 shows a compositional bias: polar residues; sequence TNGHSKTNGSHTNGSASSSVHVNNSK. A compositionally biased stretch (basic and acidic residues) spans 729 to 746; it reads QKTDAIDEIFKSLKKSAD. A Phosphoserine modification is found at S747. Positions 747–756 are enriched in acidic residues; the sequence is SDEDDDEEEP. Residues 766–776 show a composition bias toward low complexity; it reads PQKQSQSQSKA. The span at 777 to 786 shows a compositional bias: pro residues; sequence PPSPKTPPSP. S779 is modified (phosphoserine). A Phosphothreonine modification is found at T782. Residues S785 and S819 each carry the phosphoserine modification. Phosphothreonine is present on T825. The segment covering 832 to 844 has biased composition (polar residues); sequence NPFSSSKPSTDSP. S843 is modified (phosphoserine). Residue T846 is modified to Phosphothreonine. A compositionally biased stretch (polar residues) spans 859-881; that stretch reads ALKSHQQPRVGNGYQSNATSNGS. A compositionally biased stretch (basic and acidic residues) spans 912 to 923; the sequence is LLVDAREQRQRD. Low complexity predominate over residues 942-953; it reads SGSAKGNNASNS.

It belongs to the peptidase C19 family. In terms of assembly, interacts with atms/PAF1, but not with CycT. Interacts (via C-terminus) with imd (via N-terminus).

Its subcellular location is the nucleus. It localises to the nucleolus. The protein resides in the cytoplasm. The catalysed reaction is Thiol-dependent hydrolysis of ester, thioester, amide, peptide and isopeptide bonds formed by the C-terminal Gly of ubiquitin (a 76-residue protein attached to proteins as an intracellular targeting signal).. In terms of biological role, hydrolase that deubiquitinates polyubiquitinated target proteins including imd. Required for preventing the constitutive activation of the imd/NF-kappa-B (Imd) signaling cascade under unchalleneged conditions. Deubiquitinates imd linked 'Lys-63' chains which leads its proteasomal degradation and consequently down-regulation of the Imd signaling cascade. Removal of the activating 'Lys-63'-linked chains is likely to enable their replacement with 'Lys-48'-linked chains which act as 'tags' the for proteasomal degradation of imd. Required for maintaining multiple types of adult stem cells, including male and female germline, epithelial follicle cell and intestinal stem cells. May function as a transcriptional repressor by continually deubiquiting histone H2B at the promoters of genes critical for cellular differentiation, thereby preventing histone H3 'Lys-4' trimethylation (H3K4me3). Controls selective autophagy activation by ubiquitinated proteins. In Drosophila melanogaster (Fruit fly), this protein is Ubiquitin carboxyl-terminal hydrolase 36 (scny).